The following is a 356-amino-acid chain: Serendipity locus protein beta (356 aa).

A C2H2-type 1; degenerate zinc finger spans residues I171 to D193. 5 consecutive C2H2-type zinc fingers follow at residues A201–H223, L229–H251, Y257–H279, L286–H308, and Y315–H337.

Binds chromatin; requires N-terminal regions to form protein-protein contacts, in addition to DNA specific recognition by the zinc fingers.

The protein resides in the nucleus. Functionally, binds to the consensus DNA sequence 5'-YCAGAGATGCGCA-3'. The protein is Serendipity locus protein beta (Sry-beta) of Drosophila melanogaster (Fruit fly).